The primary structure comprises 89 residues: Large ribosomal subunit protein uL23cz/uL23cy (89 aa).

It belongs to the universal ribosomal protein uL23 family. Part of the 50S ribosomal subunit.

It localises to the plastid. Its subcellular location is the chloroplast. Its function is as follows. Binds to 23S rRNA. The polypeptide is Large ribosomal subunit protein uL23cz/uL23cy (rpl23-A) (Pelargonium hortorum (Common geranium)).